The primary structure comprises 212 residues: Thymidylate kinase (212 aa).

11-18 (GGEGVGKS) serves as a coordination point for ATP.

It belongs to the thymidylate kinase family.

The catalysed reaction is dTMP + ATP = dTDP + ADP. Its function is as follows. Phosphorylation of dTMP to form dTDP in both de novo and salvage pathways of dTTP synthesis. This chain is Thymidylate kinase, found in Chromohalobacter salexigens (strain ATCC BAA-138 / DSM 3043 / CIP 106854 / NCIMB 13768 / 1H11).